We begin with the raw amino-acid sequence, 418 residues long: Alpha-tubulin N-acetyltransferase 1 (418 aa).

In terms of domain architecture, N-acetyltransferase spans 1 to 186 (MEFEFDVHKI…NNFVVFEGFF (186 aa)). Residues 120-133 (FYIH…GFGK) and 156-165 (SEKFLSFLRK) contribute to the acetyl-CoA site. Disordered stretches follow at residues 237 to 292 (SSLG…MNLS) and 322 to 353 (QIKE…HQND). Positions 277–287 (QEDHSQRRRTS) are enriched in basic and acidic residues. The span at 329–353 (RTDSSAQEGRTQDRPNGSNSQHQND) shows a compositional bias: polar residues.

Belongs to the acetyltransferase ATAT1 family.

It localises to the cytoplasm. Its subcellular location is the membrane. The protein resides in the clathrin-coated pit. It is found in the cell junction. The protein localises to the focal adhesion. It localises to the cell projection. Its subcellular location is the axon. The protein resides in the cytoskeleton. It is found in the spindle. It carries out the reaction L-lysyl-[alpha-tubulin] + acetyl-CoA = N(6)-acetyl-L-lysyl-[alpha-tubulin] + CoA + H(+). Functionally, specifically acetylates 'Lys-40' in alpha-tubulin on the lumenal side of microtubules. Promotes microtubule destabilization and accelerates microtubule dynamics; this activity may be independent of acetylation activity. Acetylates alpha-tubulin with a slow enzymatic rate, due to a catalytic site that is not optimized for acetyl transfer. Enters the microtubule through each end and diffuses quickly throughout the lumen of microtubules. Acetylates only long/old microtubules because of its slow acetylation rate since it does not have time to act on dynamically unstable microtubules before the enzyme is released. May be involved in neuron development. This is Alpha-tubulin N-acetyltransferase 1 from Xenopus laevis (African clawed frog).